We begin with the raw amino-acid sequence, 320 residues long: MASTAKEGSELTLAVIGCGTMGIAILSGILASLDEIHAPNSQSSETDETPSKLPTKFIACVRSPKGAEKIKKALSPYKTPVKIIQSDNVTACREADVVLLGCKPYMAEGILGEEGMVDALKGKLLISILAGVPAEQIYGYMYGKTPVNPEKEGLCQVVRAMPNTASGIRESMTVIATSSPPLSATTSSLITWIFKRIGDVVQLPAATMDASTALCGSGPAFFALILEAAIDGAVAMGLPRAEAQRMAAQTMKGAAGLVLSGEHPALLKDKVTTPGGCTIGGLMVLEEGGVRGTVARAVREATVVASQLGKGVQGVNGTRF.

This sequence belongs to the pyrroline-5-carboxylate reductase family.

The enzyme catalyses L-proline + NADP(+) = (S)-1-pyrroline-5-carboxylate + NADPH + 2 H(+). It catalyses the reaction L-proline + NAD(+) = (S)-1-pyrroline-5-carboxylate + NADH + 2 H(+). It functions in the pathway amino-acid biosynthesis; L-proline biosynthesis; L-proline from L-glutamate 5-semialdehyde: step 1/1. The chain is Pyrroline-5-carboxylate reductase (P5CR) from Lophium arboricola (Zalerion arboricola).